The chain runs to 292 residues: MFSGSIVALITPFTPDGEVDYISLKKLVDFHVDAGTDAIVSVGTTGESATLTVEEHVKVVAKTVEFAEGRLPIIAGTGANATHEAVTFSRLLNNTGIAGYLSVTPYYNKPTQEGLFLHYNAIAQETDIPVILYNVPGRTAVDMRPETVARLSEIKNIVALKDATGDLSRVAKHREMCKEGFVLLSGDDATGLEFVKLGGQGVISVTNNIAAADMAKMMHLALDGKFDEAAIINQRLMTLHKNLFIESSPIPVKWAAHKMGLIANGDLRLPLTQLSEPARPIVAQALSEACIY.

Thr-45 contributes to the pyruvate binding site. Tyr-133 serves as the catalytic Proton donor/acceptor. Lys-161 (schiff-base intermediate with substrate) is an active-site residue. Ile-203 provides a ligand contact to pyruvate.

The protein belongs to the DapA family. As to quaternary structure, homotetramer; dimer of dimers.

The protein localises to the cytoplasm. It carries out the reaction L-aspartate 4-semialdehyde + pyruvate = (2S,4S)-4-hydroxy-2,3,4,5-tetrahydrodipicolinate + H2O + H(+). The protein operates within amino-acid biosynthesis; L-lysine biosynthesis via DAP pathway; (S)-tetrahydrodipicolinate from L-aspartate: step 3/4. Functionally, catalyzes the condensation of (S)-aspartate-beta-semialdehyde [(S)-ASA] and pyruvate to 4-hydroxy-tetrahydrodipicolinate (HTPA). The polypeptide is 4-hydroxy-tetrahydrodipicolinate synthase (Vibrio cholerae serotype O1 (strain M66-2)).